The following is a 241-amino-acid chain: Ribosome-inactivating protein luffaculin 1 (241 aa).

N-linked (GlcNAc...) asparagine glycosylation is found at Asn28, Asn33, Asn77, and Asn84. Glu159 is an active-site residue. An N-linked (GlcNAc...) asparagine glycan is attached at Asn205.

It belongs to the ribosome-inactivating protein family. Type 1 RIP subfamily.

It carries out the reaction Endohydrolysis of the N-glycosidic bond at one specific adenosine on the 28S rRNA.. The sequence is that of Ribosome-inactivating protein luffaculin 1 from Luffa acutangula (Ridged gourd).